A 338-amino-acid chain; its full sequence is mRNA decay activator protein ZFP36L1 (338 aa).

Residues 1–111 (MTTTLVSATI…QKQPGSGQVN (111 aa)) are necessary and sufficient for the association with mRNA decay enzymes and mRNA decay activation. Residue Ser-54 is modified to Phosphoserine; by MAPKAPK2. A Phosphoserine; by PKB/AKT1 modification is found at Ser-90. Ser-92 carries the post-translational modification Phosphoserine; by PKB/AKT1 and MAPKAPK2. Positions 93–113 (EGGERLLPTQKQPGSGQVNSS) are disordered. The span at 101 to 113 (TQKQPGSGQVNSS) shows a compositional bias: polar residues. 2 C3H1-type zinc fingers span residues 114–142 (RYKT…HGIH) and 152–180 (KYKT…HNAE). The segment at 185–338 (LAGGRDLSAD…IFSRLSISDD (154 aa)) is necessary for mRNA decay activation. A Phosphoserine; by PKB/AKT1 and MAPKAPK2 modification is found at Ser-203. Residues 273–338 (SPTTFLFRPM…IFSRLSISDD (66 aa)) are disordered. Over residues 305–318 (YLSSSSSSHSGSDS) the composition is skewed to low complexity. Ser-318 carries the phosphoserine modification. At Ser-334 the chain carries Phosphoserine; by RPS6KA1.

Associates with the cytoplasmic CCR4-NOT deadenylase and RNA exosome complexes to trigger ARE-containing mRNA deadenylation and decay processes. Interacts with CNOT1. Interacts (via N-terminus) with CNOT6. Interacts with CNOT7; this interaction is inhibited in response to phorbol 12-myristate 13-acetate (PMA) treatment in a p38 MAPK-dependent manner. Interacts with DCP1A. Interacts (via N-terminus) with DCP2. Interacts (via N-terminus) with EXOSC2. Interacts with XRN1. Interacts (via phosphorylated form) with YWHAB; this interaction occurs in a protein kinase AKT1-dependent manner. Interacts (via phosphorylated form) with YWHAZ; this interaction occurs in a p38 MAPK- and AKT-signaling pathways. Post-translationally, phosphorylated. Phosphorylated by RPS6KA1 at Ser-334 upon phorbol 12-myristate 13-acetate (PMA) treatment; this phosphorylation results in dissociation of the CCR4-NOT deadenylase complex and induces p38 MAPK-mediated stabilization of the low-density lipoprotein receptor LDLR mRNA. Phosphorylated by protein kinase AKT1 at Ser-92 and Ser-203 in response to insulin; these phosphorylations stabilize ZFP36L1, increase the association with 14-3-3 proteins and mediate ARE-containing mRNA stabilization. AKT1-mediated phosphorylation at Ser-92 does not impair ARE-containing RNA-binding. Phosphorylated at Ser-54, Ser-92 and Ser-203 by MAPKAPK2; these phosphorylations increase the association with 14-3-3 proteins and mediate ARE-containing mRNA stabilization in a protein kinase AKT1-independent manner. MAPKAPK2-mediated phosphorylations at Ser-54, Ser-92 and Ser-203 do not impair ARE-containing RNA-binding. Phosphorylations increase the association with 14-3-3 proteins and mediate ARE-containing mRNA stabilization during early adipogenesis in a p38 MAPK- and AKT-dependent manner. Phosphorylated by protein kinase AKT1 at Ser-92. Ubiquitinated. Ubiquitination leads to proteasomal degradation, a process inhibited by phosphorylations at Ser-90, Ser-92 and Ser-203.

It localises to the nucleus. It is found in the cytoplasm. Its subcellular location is the cytoplasmic granule. The protein resides in the P-body. In terms of biological role, zinc-finger RNA-binding protein that destabilizes several cytoplasmic AU-rich element (ARE)-containing mRNA transcripts by promoting their poly(A) tail removal or deadenylation, and hence provide a mechanism for attenuating protein synthesis. Acts as a 3'-untranslated region (UTR) ARE mRNA-binding adapter protein to communicate signaling events to the mRNA decay machinery. Functions by recruiting the CCR4-NOT deadenylase complex and components of the cytoplasmic RNA decay machinery to the bound ARE-containing mRNAs, and hence promotes ARE-mediated mRNA deadenylation and decay processes. Also induces the degradation of ARE-containing mRNAs even in absence of poly(A) tail. Binds to 3'-UTR ARE of numerous mRNAs. Positively regulates early adipogenesis by promoting ARE-mediated mRNA decay of immediate early genes (IEGs). Promotes ARE-mediated mRNA decay of mineralocorticoid receptor NR3C2 mRNA in response to hypertonic stress. Negatively regulates hematopoietic/erythroid cell differentiation by promoting ARE-mediated mRNA decay of the transcription factor STAT5B mRNA. Positively regulates monocyte/macrophage cell differentiation by promoting ARE-mediated mRNA decay of the cyclin-dependent kinase CDK6 mRNA. Promotes degradation of ARE-containing pluripotency-associated mRNAs in embryonic stem cells (ESCs), such as NANOG, through a fibroblast growth factor (FGF)-induced MAPK-dependent signaling pathway, and hence attenuates ESC self-renewal and positively regulates mesendoderm differentiation. May play a role in mediating pro-apoptotic effects in malignant B-cells by promoting ARE-mediated mRNA decay of BCL2 mRNA. In association with ZFP36L2 maintains quiescence on developing B lymphocytes by promoting ARE-mediated decay of several mRNAs encoding cell cycle regulators that help B cells progress through the cell cycle, and hence ensuring accurate variable-diversity-joining (VDJ) recombination and functional immune cell formation. Together with ZFP36L2 is also necessary for thymocyte development and prevention of T-cell acute lymphoblastic leukemia (T-ALL) transformation by promoting ARE-mediated mRNA decay of the oncogenic transcription factor NOTCH1 mRNA. Participates in the delivery of target ARE-mRNAs to processing bodies (PBs). In addition to its cytosolic mRNA-decay function, plays a role in the regulation of nuclear mRNA 3'-end processing; modulates mRNA 3'-end maturation efficiency of the DLL4 mRNA through binding with an ARE embedded in a weak noncanonical polyadenylation (poly(A)) signal in endothelial cells. Also involved in the regulation of stress granule (SG) and P-body (PB) formation and fusion. Plays a role in vasculogenesis and endocardial development. Plays a role in the regulation of keratinocyte proliferation, differentiation and apoptosis. Plays a role in myoblast cell differentiation. This chain is mRNA decay activator protein ZFP36L1, found in Rattus norvegicus (Rat).